Consider the following 346-residue polypeptide: SUMO-activating enzyme subunit 1 (346 aa).

Position 1 is an N-acetylmethionine (M1). Residue V2 is modified to N-acetylvaline; in SUMO-activating enzyme subunit 1, N-terminally processed. Position 12 is a phosphoserine (S12). K198 is subject to N6-acetyllysine.

Belongs to the ubiquitin-activating E1 family. As to quaternary structure, heterodimer of SAE1 and UBA2/SAE2. The heterodimer corresponds to the two domains that are encoded on a single polypeptide chain in ubiquitin-activating enzyme E1. Interacts with UBE2I.

Its subcellular location is the nucleus. It participates in protein modification; protein sumoylation. Its function is as follows. The heterodimer acts as an E1 ligase for SUMO1, SUMO2, SUMO3, and probably SUMO4. It mediates ATP-dependent activation of SUMO proteins followed by formation of a thioester bond between a SUMO protein and a conserved active site cysteine residue on UBA2/SAE2. The sequence is that of SUMO-activating enzyme subunit 1 (SAE1) from Bos taurus (Bovine).